A 325-amino-acid chain; its full sequence is Eukaryotic translation initiation factor 3 subunit I (325 aa).

WD repeat units lie at residues G8–T47, G50–K91, C144–N183, and E186–T225. The residue at position 219 (T219) is a Phosphothreonine. K264 bears the N6-acetyllysine mark. A Glycyl lysine isopeptide (Lys-Gly) (interchain with G-Cter in ubiquitin) cross-link involves residue K282. The stretch at G283 to E324 is one WD 5 repeat. Y308 carries the post-translational modification Phosphotyrosine.

Belongs to the eIF-3 subunit I family. In terms of assembly, component of the eukaryotic translation initiation factor 3 (eIF-3) complex, which is composed of 13 subunits: EIF3A, EIF3B, EIF3C, EIF3D, EIF3E, EIF3F, EIF3G, EIF3H, EIF3I, EIF3J, EIF3K, EIF3L and EIF3M. The eIF-3 complex appears to include 3 stable modules: module A is composed of EIF3A, EIF3B, EIF3G and EIF3I; module B is composed of EIF3F, EIF3H, and EIF3M; and module C is composed of EIF3C, EIF3D, EIF3E, EIF3K and EIF3L. EIF3C of module C binds EIF3B of module A and EIF3H of module B, thereby linking the three modules. EIF3J is a labile subunit that binds to the eIF-3 complex via EIF3B. The eIF-3 complex may interact with RPS6KB1 under conditions of nutrient depletion. Mitogenic stimulation may lead to binding and activation of a complex composed of MTOR and RPTOR, leading to phosphorylation and release of RPS6KB1 and binding of EIF4B to eIF-3. Phosphorylated by TGF-beta type II receptor.

It localises to the cytoplasm. Its function is as follows. Component of the eukaryotic translation initiation factor 3 (eIF-3) complex, which is required for several steps in the initiation of protein synthesis. The eIF-3 complex associates with the 40S ribosome and facilitates the recruitment of eIF-1, eIF-1A, eIF-2:GTP:methionyl-tRNAi and eIF-5 to form the 43S pre-initiation complex (43S PIC). The eIF-3 complex stimulates mRNA recruitment to the 43S PIC and scanning of the mRNA for AUG recognition. The eIF-3 complex is also required for disassembly and recycling of post-termination ribosomal complexes and subsequently prevents premature joining of the 40S and 60S ribosomal subunits prior to initiation. The eIF-3 complex specifically targets and initiates translation of a subset of mRNAs involved in cell proliferation, including cell cycling, differentiation and apoptosis, and uses different modes of RNA stem-loop binding to exert either translational activation or repression. The sequence is that of Eukaryotic translation initiation factor 3 subunit I (Eif3i) from Mus musculus (Mouse).